The following is a 512-amino-acid chain: Serine palmitoyltransferase 3 (512 aa).

N6-(pyridoxal phosphate)lysine is present on lysine 345.

It belongs to the class-II pyridoxal-phosphate-dependent aminotransferase family. As to quaternary structure, heterodimer of sptl-1/sptl-3. Pyridoxal 5'-phosphate is required as a cofactor.

It carries out the reaction L-serine + hexadecanoyl-CoA + H(+) = 3-oxosphinganine + CO2 + CoA. Its pathway is lipid metabolism; sphingolipid metabolism. Component of the serine palmitoyltransferase (SPT) that catalyzes the first committed step in sphingolipid biosynthesis, which is the condensation of an acyl-CoA species and L-serine. The catalytic core is composed of a heterodimer of sptl-1 and sptl-2 or sptl-1 and sptl-3. Required for the specification of abicobasal polarity and development of the gut lumen. The sequence is that of Serine palmitoyltransferase 3 (sptl-3) from Caenorhabditis elegans.